The chain runs to 96 residues: Co-chaperonin GroES (96 aa).

Belongs to the GroES chaperonin family. In terms of assembly, heptamer of 7 subunits arranged in a ring. Interacts with the chaperonin GroEL.

Its subcellular location is the cytoplasm. Together with the chaperonin GroEL, plays an essential role in assisting protein folding. The GroEL-GroES system forms a nano-cage that allows encapsulation of the non-native substrate proteins and provides a physical environment optimized to promote and accelerate protein folding. GroES binds to the apical surface of the GroEL ring, thereby capping the opening of the GroEL channel. In Leptothrix cholodnii (strain ATCC 51168 / LMG 8142 / SP-6) (Leptothrix discophora (strain SP-6)), this protein is Co-chaperonin GroES.